The primary structure comprises 772 residues: Phosphoribosylformylglycinamidine synthase subunit PurL (772 aa).

The active site involves His-62. The ATP site is built by Tyr-65 and Lys-109. Glu-111 contacts Mg(2+). Substrate is bound by residues 112 to 115 (SHNH) and Arg-134. His-113 (proton acceptor) is an active-site residue. Asp-135 contacts Mg(2+). Gln-259 contacts substrate. Residue Asp-287 participates in Mg(2+) binding. 331–333 (ESQ) contributes to the substrate binding site. ATP-binding residues include Asp-519 and Gly-556. Asn-557 contacts Mg(2+). Ser-559 is a substrate binding site.

This sequence belongs to the FGAMS family. Monomer. Part of the FGAM synthase complex composed of 1 PurL, 1 PurQ and 2 PurS subunits.

The protein localises to the cytoplasm. It carries out the reaction N(2)-formyl-N(1)-(5-phospho-beta-D-ribosyl)glycinamide + L-glutamine + ATP + H2O = 2-formamido-N(1)-(5-O-phospho-beta-D-ribosyl)acetamidine + L-glutamate + ADP + phosphate + H(+). Its pathway is purine metabolism; IMP biosynthesis via de novo pathway; 5-amino-1-(5-phospho-D-ribosyl)imidazole from N(2)-formyl-N(1)-(5-phospho-D-ribosyl)glycinamide: step 1/2. Its function is as follows. Part of the phosphoribosylformylglycinamidine synthase complex involved in the purines biosynthetic pathway. Catalyzes the ATP-dependent conversion of formylglycinamide ribonucleotide (FGAR) and glutamine to yield formylglycinamidine ribonucleotide (FGAM) and glutamate. The FGAM synthase complex is composed of three subunits. PurQ produces an ammonia molecule by converting glutamine to glutamate. PurL transfers the ammonia molecule to FGAR to form FGAM in an ATP-dependent manner. PurS interacts with PurQ and PurL and is thought to assist in the transfer of the ammonia molecule from PurQ to PurL. This is Phosphoribosylformylglycinamidine synthase subunit PurL from Leifsonia xyli subsp. xyli (strain CTCB07).